A 108-amino-acid chain; its full sequence is Large ribosomal subunit protein bL31B (108 aa).

Positions 88 to 108 (AAVEEAPAVKSKKKAPIKKKK) are disordered. Basic residues predominate over residues 97-108 (KSKKKAPIKKKK).

This sequence belongs to the bacterial ribosomal protein bL31 family. Type B subfamily. In terms of assembly, part of the 50S ribosomal subunit.

The sequence is that of Large ribosomal subunit protein bL31B from Chlamydia abortus (strain DSM 27085 / S26/3) (Chlamydophila abortus).